The chain runs to 733 residues: 2'-5'-oligoadenylate synthase 2 (733 aa).

Glycine 2 is lipidated: N-myristoyl glycine. OAS domain stretches follow at residues 47–365 (VPSQ…CWDV) and 373–713 (TPSH…WKVP). Lysine 408 bears the N6-acetyllysine mark. Position 427 (serine 427) interacts with ATP. The Mg(2+) site is built by aspartate 439, aspartate 441, and aspartate 510. Residues arginine 574 and lysine 577 each contribute to the ATP site.

It belongs to the 2-5A synthase family. In terms of assembly, homodimer. Requires Mg(2+) as cofactor. Post-translationally, myristoylation is not essential for its activity. In terms of processing, glycosylated. Glycosylation is essential for its activity.

It is found in the cytoplasm. The protein localises to the perinuclear region. The catalysed reaction is 3 ATP = 5'-triphosphoadenylyl-(2'-&gt;5')-adenylyl-(2'-&gt;5')-adenosine + 2 diphosphate. Its activity is regulated as follows. Produced as a latent enzyme which is activated by double stranded RNA (dsRNA) generated during the course of viral infection. The dsRNA activator must be at least 15 nucleotides long, and no modification of the 2'-hydroxyl group is tolerated. ssRNA or dsDNA do not act as activators. Strongly inhibited by copper, iron and zinc ions. Partially inhibited by cobalt and nickel ions. Functionally, interferon-induced, dsRNA-activated antiviral enzyme which plays a critical role in cellular innate antiviral response. Activated by detection of double stranded RNA (dsRNA): polymerizes higher oligomers of 2'-5'-oligoadenylates (2-5A) from ATP which then bind to the inactive monomeric form of ribonuclease L (RNASEL) leading to its dimerization and subsequent activation. Activation of RNASEL leads to degradation of cellular as well as viral RNA, resulting in the inhibition of protein synthesis, thus terminating viral replication. Can mediate the antiviral effect via the classical RNASEL-dependent pathway or an alternative antiviral pathway independent of RNASEL. In addition, it may also play a role in other cellular processes such as apoptosis, cell growth, differentiation and gene regulation. May act as a negative regulator of lactation, stopping lactation in virally infected mammary gland lobules, thereby preventing transmission of viruses to neonates. Non-infected lobules would not be affected, allowing efficient pup feeding during infection. This chain is 2'-5'-oligoadenylate synthase 2 (Oas2), found in Rattus norvegicus (Rat).